Reading from the N-terminus, the 516-residue chain is MKKIKLLLVAGACVVLSACSPQAPTVHTTDKGTQWEWNEGTIVVKSPERPAGQKSVIGLTAPKMEVVRVGFVGLGMRGPGAVSRFTHIPGTQIVALCDYDPKRAEACQNILKKASMPKAAIYSGETGYEELCKRDDIDLVYIAADWLHHFPIAKCALENGKHVAIEVPSAMNLQECWDLVNLSETTRKHCFILENCCYDWFEMNTLNMAQNGVFGEVIRAQGAYIHNLSDFWDYYWKNGENDKLGWRLEFNMRHRGDVYATHGLGPVAQVLDIHRGDRMKTLTAMDTKSVVGKGLVEAKTGSECTNFRNGDHTTTMIRTENGKVIEIQHNVMTPQPYNRLYQLTGVKGFANKYPTEGYALGADQLSASGVQPKVDNLSSHGFLPQAEMDALVEKYQHPILKKYGEIAKEVGGHGGMDFIMDSRLVYCLQNGLPLDMDVYDLAEWCALAELGEISMDNNCAAVEFPDFTRGEWNVVKGYKHAYASPEEEQASMEKAKAFTAKLKERGAKEWATEADK.

The N-terminal stretch at 1 to 18 is a signal peptide; sequence MKKIKLLLVAGACVVLSA. Cys19 carries the N-palmitoyl cysteine lipid modification. Cys19 carries the S-diacylglycerol cysteine lipid modification. NAD(+) contacts are provided by residues 76–77, Asp98, 146–149, 166–167, and Asn195; these read MR, WLHH, and EV. Residues Tyr224, Arg247, 259 to 262, and Tyr337 each bind substrate; that span reads YATH. Tyr259 lines the NAD(+) pocket.

Belongs to the Gfo/Idh/MocA family. Glycosyl hydrolase 109 subfamily. NAD(+) is required as a cofactor.

The protein resides in the cell membrane. Its function is as follows. Glycosidase. This is Glycosyl hydrolase family 109 protein 4 from Phocaeicola vulgatus (strain ATCC 8482 / DSM 1447 / JCM 5826 / CCUG 4940 / NBRC 14291 / NCTC 11154) (Bacteroides vulgatus).